Here is a 283-residue protein sequence, read N- to C-terminus: Diaminopimelate epimerase (283 aa).

3 residues coordinate substrate: Asn13, Gln46, and Asn66. Cys75 (proton donor) is an active-site residue. Residues 76–77, Asn166, Asn199, and 217–218 contribute to the substrate site; these read GN and ER. Cys226 (proton acceptor) is an active-site residue. 227–228 is a binding site for substrate; sequence GT.

It belongs to the diaminopimelate epimerase family. Homodimer.

Its subcellular location is the cytoplasm. The catalysed reaction is (2S,6S)-2,6-diaminopimelate = meso-2,6-diaminopimelate. It functions in the pathway amino-acid biosynthesis; L-lysine biosynthesis via DAP pathway; DL-2,6-diaminopimelate from LL-2,6-diaminopimelate: step 1/1. Catalyzes the stereoinversion of LL-2,6-diaminopimelate (L,L-DAP) to meso-diaminopimelate (meso-DAP), a precursor of L-lysine and an essential component of the bacterial peptidoglycan. The chain is Diaminopimelate epimerase from Herminiimonas arsenicoxydans.